The primary structure comprises 471 residues: Glutamate--tRNA ligase 1 (471 aa).

A 'HIGH' region motif is present at residues 15–25 (PSPTGYLHIGG). Positions 243–247 (KLSKR) match the 'KMSKS' region motif. An ATP-binding site is contributed by lysine 246.

The protein belongs to the class-I aminoacyl-tRNA synthetase family. Glutamate--tRNA ligase type 1 subfamily. Monomer.

It localises to the cytoplasm. The catalysed reaction is tRNA(Glu) + L-glutamate + ATP = L-glutamyl-tRNA(Glu) + AMP + diphosphate. In terms of biological role, catalyzes the attachment of glutamate to tRNA(Glu) in a two-step reaction: glutamate is first activated by ATP to form Glu-AMP and then transferred to the acceptor end of tRNA(Glu). The sequence is that of Glutamate--tRNA ligase 1 from Cereibacter sphaeroides (strain ATCC 17023 / DSM 158 / JCM 6121 / CCUG 31486 / LMG 2827 / NBRC 12203 / NCIMB 8253 / ATH 2.4.1.) (Rhodobacter sphaeroides).